A 427-amino-acid polypeptide reads, in one-letter code: MRKEKSLGLAAEMRKLAEASREAARALSHADPRRKDAALRAAAEAIGRREKRILSENARDVAAARAAGQNAAYLDRLRLDPKRLAGIGAALHEIAGLRDPVGEVTASWRRPNGLEIRKVRIPLGVVLMVYEARPNVTVDAAALCLKSGNAAILRPGSDALRSSLALAAAFAEGLEKAGLPAASAQVVPTPDREATYELLALDDLIDLAIPRGGPSLIRAVAARSRVPVLKHYQGVCHLYLDASAPPQQAVDLALNGKVQRPGVCNATECLLVHRGAAGKLLPPVGRALADAGVELRCDPTALTILKRAGVAAVPARPDDFGKEFLDKILAVRVVADLDGALDHIARYGSLHTEAIVTRDLASARRFQREVDASAVMVNASTRFNDGGELGLGAEIGISTTKLHAFGPMGLAELTTQKFLVEGEGHVR.

Belongs to the gamma-glutamyl phosphate reductase family.

The protein resides in the cytoplasm. The catalysed reaction is L-glutamate 5-semialdehyde + phosphate + NADP(+) = L-glutamyl 5-phosphate + NADPH + H(+). It functions in the pathway amino-acid biosynthesis; L-proline biosynthesis; L-glutamate 5-semialdehyde from L-glutamate: step 2/2. Functionally, catalyzes the NADPH-dependent reduction of L-glutamate 5-phosphate into L-glutamate 5-semialdehyde and phosphate. The product spontaneously undergoes cyclization to form 1-pyrroline-5-carboxylate. In Anaeromyxobacter dehalogenans (strain 2CP-1 / ATCC BAA-258), this protein is Gamma-glutamyl phosphate reductase.